The chain runs to 860 residues: Valine--tRNA ligase (860 aa).

The 'HIGH' region motif lies at 43-53 (PTVSGALHVGH). The segment at 469–491 (LPVDPSSDAPTGYQESQRNQPGG) is disordered. Residues 574 to 578 (KMSKS) carry the 'KMSKS' region motif. ATP is bound at residue K577.

It belongs to the class-I aminoacyl-tRNA synthetase family. ValS type 2 subfamily. In terms of assembly, monomer.

Its subcellular location is the cytoplasm. The catalysed reaction is tRNA(Val) + L-valine + ATP = L-valyl-tRNA(Val) + AMP + diphosphate. Catalyzes the attachment of valine to tRNA(Val). As ValRS can inadvertently accommodate and process structurally similar amino acids such as threonine, to avoid such errors, it has a 'posttransfer' editing activity that hydrolyzes mischarged Thr-tRNA(Val) in a tRNA-dependent manner. This Salinispora tropica (strain ATCC BAA-916 / DSM 44818 / JCM 13857 / NBRC 105044 / CNB-440) protein is Valine--tRNA ligase.